The following is a 407-amino-acid chain: Elongation factor Tu (407 aa).

The tr-type G domain maps to K10 to E217. Positions G19 to T26 are G1. Residue G19–T26 participates in GTP binding. T26 contributes to the Mg(2+) binding site. Residues G60–A64 are G2. The interval D81–G84 is G3. Residues D81–H85 and N136–D139 contribute to the GTP site. The segment at N136–D139 is G4. The segment at S184–L186 is G5.

This sequence belongs to the TRAFAC class translation factor GTPase superfamily. Classic translation factor GTPase family. EF-Tu/EF-1A subfamily. Monomer.

It is found in the cytoplasm. The catalysed reaction is GTP + H2O = GDP + phosphate + H(+). Functionally, GTP hydrolase that promotes the GTP-dependent binding of aminoacyl-tRNA to the A-site of ribosomes during protein biosynthesis. The polypeptide is Elongation factor Tu (Teredinibacter turnerae (strain ATCC 39867 / T7901)).